Consider the following 579-residue polypeptide: Mycobactin import ATP-binding/permease protein IrtB (579 aa).

The Cytoplasmic segment spans residues 1–16; that stretch reads MIRTWIALVPNDHRAR. Residues 17–37 form a helical membrane-spanning segment; sequence LIGFALLAFCSVVARAVGTVL. The ABC transmembrane type-1 domain maps to 17 to 299; it reads LIGFALLAFC…VSELAPALES (283 aa). At 38–52 the chain is on the periplasmic side; it reads LVPLMAALFGEAPQR. A helical membrane pass occupies residues 53–73; the sequence is AWLWLGWLSAATVAGWVLDAV. Residues 74-123 lie on the Cytoplasmic side of the membrane; the sequence is TARIGIELGFAVLNHTQHDVADRLPVVRLDWFTAENTATARQAIAATGPE. Residues 124–146 traverse the membrane as a helical segment; that stretch reads LVGLVVNLVTPLTSAILLPAVIA. Topologically, residues 147 to 155 are periplasmic; the sequence is LALLPISWQ. A helical transmembrane segment spans residues 156–178; the sequence is LGVAALAGVPLLLGALWASAAFA. Residues 179-237 lie on the Cytoplasmic side of the membrane; it reads RRADTAADKANTALTERIIEFARTQQALRAARRVEPARSLVGNALASQHTATMRLLGMQ. Residues 238–258 traverse the membrane as a helical segment; that stretch reads IPGQLLFSIASQLALIVLAGT. The Periplasmic portion of the chain corresponds to 259 to 579; the sequence is TAALTITGTL…EAAEWQILAE (321 aa). The ABC transporter domain maps to 332–567; it reads IEFDDVAFGY…GGRFSQFWRQ (236 aa). Position 366-373 (366-373) interacts with ATP; that stretch reads GPSGCGKS.

The protein belongs to the ABC transporter superfamily. Siderophore-Fe(3+) uptake transporter (SIUT) (TC 3.A.1.21) family. In terms of assembly, forms a heterodimer with IrtA.

The protein resides in the cell inner membrane. Its function is as follows. Part of the ABC transporter complex IrtAB involved in the import of iron-bound mycobactin (Fe-MBT) and carboxymycobactin (Fe-cMBT). Transmembrane domains (TMD) form a pore in the membrane and the ATP-binding domain (NBD) is responsible for energy generation. This chain is Mycobactin import ATP-binding/permease protein IrtB (irtB), found in Mycobacterium bovis (strain ATCC BAA-935 / AF2122/97).